Consider the following 117-residue polypeptide: Putative iron-sulfur cluster insertion protein ErpA (117 aa).

3 residues coordinate iron-sulfur cluster: Cys45, Cys109, and Cys111.

It belongs to the HesB/IscA family. In terms of assembly, homodimer. It depends on iron-sulfur cluster as a cofactor.

Required for insertion of 4Fe-4S clusters. The chain is Putative iron-sulfur cluster insertion protein ErpA from Methylobacillus flagellatus (strain ATCC 51484 / DSM 6875 / VKM B-1610 / KT).